Reading from the N-terminus, the 141-residue chain is Hemoglobin subunit alpha (141 aa).

The Globin domain occupies 1-141; the sequence is VLSSKDKTNV…VSTVLTSKYR (141 aa). A Phosphoserine modification is found at Ser3. An N6-succinyllysine modification is found at Lys7. The residue at position 8 (Thr8) is a Phosphothreonine. The residue at position 11 (Lys11) is an N6-succinyllysine. Lys16 is subject to N6-acetyllysine; alternate. Lys16 bears the N6-succinyllysine; alternate mark. Tyr24 carries the post-translational modification Phosphotyrosine. At Lys40 the chain carries N6-succinyllysine. The residue at position 49 (Ser49) is a Phosphoserine. Position 58 (His58) interacts with O2. His87 lines the heme b pocket. Ser102 carries the phosphoserine modification. Thr108 bears the Phosphothreonine mark. Residue Ser124 is modified to Phosphoserine. Phosphothreonine occurs at positions 134 and 137. Residue Ser138 is modified to Phosphoserine.

This sequence belongs to the globin family. Heterotetramer of two alpha chains and two beta chains. As to expression, red blood cells.

Involved in oxygen transport from the lung to the various peripheral tissues. Functionally, hemopressin acts as an antagonist peptide of the cannabinoid receptor CNR1. Hemopressin-binding efficiently blocks cannabinoid receptor CNR1 and subsequent signaling. The protein is Hemoglobin subunit alpha (HBA) of Camelus dromedarius (Dromedary).